Reading from the N-terminus, the 165-residue chain is Regulatory protein RecX (165 aa).

The protein belongs to the RecX family.

The protein localises to the cytoplasm. Its function is as follows. Modulates RecA activity. The sequence is that of Regulatory protein RecX from Cronobacter sakazakii (strain ATCC BAA-894) (Enterobacter sakazakii).